Here is an 885-residue protein sequence, read N- to C-terminus: Eisosome protein 1 (885 aa).

Disordered regions lie at residues 1–39 (MSLI…DNQP) and 695–885 (LAKH…KEVF). Residues 13–23 (DTASVASGSSA) are compositionally biased toward polar residues. A compositionally biased stretch (basic and acidic residues) spans 701–725 (KKEEPAEEKLETVAEEASAMKKEKP). Residues 726–757 (TAAAATTAAAAAATTPKKPASAPRAAPAAASP) show a composition bias toward low complexity. Basic and acidic residues-rich tracts occupy residues 779–801 (HMIE…DSVS) and 873–885 (SETK…KEVF).

It belongs to the EIS1 family.

The protein localises to the cytoplasmic granule. It localises to the cell membrane. Required for normal formation of eisosomes, large cytoplasmic protein assemblies that localize to specialized domains on plasma membrane and mark the site of endocytosis. This is Eisosome protein 1 (EIS1) from Candida glabrata (strain ATCC 2001 / BCRC 20586 / JCM 3761 / NBRC 0622 / NRRL Y-65 / CBS 138) (Yeast).